A 329-amino-acid chain; its full sequence is MAKAPMRVAVTGAAGQIGYSLLFRIANGDLLGKDQPVILQLLEIPDEKAQKALAGVMMELEDCAFPLLAGMTAHSDPMTAFKDIDVALLVGARPRGPGMERKDLLSANAQIFTAQGKALNVVAKKTVKVLVVGNPANTNAYIAMKSAPDIPAKNFTAMLRLDHNRALSQLANKLNKPVADIEKLVVWGNHSPTMYPDYRFATIDGKSVKDSINDAAWNKDVFIPTVGKRGAAIIEARGLSSAASAANAAIDHIHDWVLGTNGKWVTMGIPSKGEYDIPAEVIYGFPVVCENGEYKMIEGLEIDEFSRERMTHTLNELLEEQAGVKHLLS.

An NAD(+)-binding site is contributed by 12–18 (GAAGQIG). Substrate contacts are provided by Arg95 and Arg101. Residues Asn108, Gln115, and 132 to 134 (VGN) each bind NAD(+). Asn134 and Arg165 together coordinate substrate. Residue His190 is the Proton acceptor of the active site.

Belongs to the LDH/MDH superfamily. MDH type 2 family.

The enzyme catalyses (S)-malate + NAD(+) = oxaloacetate + NADH + H(+). Catalyzes the reversible oxidation of malate to oxaloacetate. The polypeptide is Malate dehydrogenase (Polynucleobacter necessarius subsp. necessarius (strain STIR1)).